The following is a 364-amino-acid chain: 3'(2'),5'-bisphosphate nucleotidase 1 (364 aa).

D54 acts as the Proton acceptor in catalysis. Residues E77, D141, I143, and D144 each coordinate Mg(2+). T146 serves as the catalytic Proton acceptor. Residues T146, H243, S272, K275, R289, and D302 each coordinate adenosine 3',5'-bisphosphate. Residues H243, S272, K275, R289, and D302 each contribute to the AMP site. D302 provides a ligand contact to Mg(2+).

This sequence belongs to the inositol monophosphatase superfamily. It depends on Mg(2+) as a cofactor.

It catalyses the reaction 3'-phosphoadenylyl sulfate + H2O = adenosine 5'-phosphosulfate + phosphate. The catalysed reaction is adenosine 3',5'-bisphosphate + H2O = AMP + phosphate. It carries out the reaction adenosine 2',5'-bisphosphate + H2O = AMP + phosphate. Functionally, phosphatase that converts adenosine 3'-phosphate 5'-phosphosulfate (PAPS) to adenosine 5'-phosphosulfate (APS) and 3'(2')-phosphoadenosine 5'-phosphate (PAP) to AMP. Regulates the flux of sulfur in the sulfur-activation pathway by converting PAPS to APS. Involved in salt tolerance. The polypeptide is 3'(2'),5'-bisphosphate nucleotidase 1 (HAL21) (Candida albicans (strain SC5314 / ATCC MYA-2876) (Yeast)).